The following is a 485-amino-acid chain: Vacuolar fusion protein CCZ1 homolog (485 aa).

The protein belongs to the CCZ1 family. As to quaternary structure, component of the Mon1-Ccz1 guanyl-nucleotide exchange factor complex made up of Mon1, Ccz1 and Bulli; the interaction of Bulli with the Mon1-Ccz1 heterodimer is mediated via the C-terminal Mic1 domain of Bulli. Mon1 and Ccz1 form a stable complex which displays Rab7 GEF activity with or without Bulli; GEF activity is enhanced by Bulli possibly by improving membrane association of the complex. Interacts with Rab5 and Rab7; preferentially binds GTP-bound Rab5 and GDP-bound Rab7.

It localises to the cytoplasm. The protein resides in the cytosol. With respect to regulation, the Rab7 guanyl-nucleotide exchange factor (GEF) activity of the Mon1-Ccz1 complex is autoinhibited by the N-terminal disordered region of Mon1. GEF activity is stimulated by Rab5-mediated recruitment to membranes. In terms of biological role, part of the Mon1-Ccz1 guanyl-nucleotide exchange factor complex specific for Rab7 that promotes the exchange of GDP to GTP, converting Rab7 from an inactive GDP-bound form into an active GTP-bound form. Required for recruitment of Rab7 to endosomal and autophagosomal membranes to mediate endolysosomal and autolysosomal vesicle maturation. Required for fusion of multivesicular bodies and lysosomes but not their formation or trafficking. Involved in the replacement of Rab5 (and possibly Rab4) with Rab7, also known as Rab conversion or the Rab cascade, during endosomal maturation. The Mon1-Ccz1 complex is recruited to phosphatidylinositol 3-phosphate (PtdIns[3]P) enriched membranes by Rab5, which stimulates recruitment and guanyl-nucleotide exchange of Rab7. Together with Rab7 required for autolysosome formation in fat cells and autophagic degradation during starvation-induced basal and developmental autophagy. This is Vacuolar fusion protein CCZ1 homolog from Drosophila melanogaster (Fruit fly).